A 64-amino-acid polypeptide reads, in one-letter code: Large ribosomal subunit protein bL33c (64 aa).

This sequence belongs to the bacterial ribosomal protein bL33 family.

It is found in the plastid. The protein localises to the chloroplast. This chain is Large ribosomal subunit protein bL33c, found in Phaeodactylum tricornutum (strain CCAP 1055/1).